A 558-amino-acid chain; its full sequence is V-set and immunoglobulin domain-containing protein 10 (558 aa).

A signal peptide spans 1 to 20 (MAGLRVLLCLGALLARQGSA). Over 21 to 426 (GLQLLLNPSR…IWLSVKEPLN (406 aa)) the chain is Extracellular. N32, N60, N121, N150, N159, and N218 each carry an N-linked (GlcNAc...) asparagine glycan. Ig-like C2-type domains are found at residues 37-140 (PNSE…RLRV), 144-235 (PAYV…RKVT), 248-327 (PQCS…VKLS), and 332-420 (PSQP…IWLS). A disulfide bond links C65 and C124. Disulfide bonds link C174–C221 and C265–C308. N-linked (GlcNAc...) asparagine glycosylation occurs at N344. Cysteines 349 and 404 form a disulfide. A helical transmembrane segment spans residues 427–447 (IGGIVGTVVSLLLLGLAVVSG). The Cytoplasmic segment spans residues 448–558 (LTLYYSPAFW…GIVQEDGKPV (111 aa)). Over residues 477 to 506 (DSEEEEEEEEEEEEKEDVAEEVEQETNETE) the composition is skewed to acidic residues. 2 disordered regions span residues 477 to 515 (DSEEEEEEEEEEEEKEDVAEEVEQETNETEELPKGISKH) and 532 to 558 (MGNGFQEFQDDSDGQQSGIVQEDGKPV).

Its subcellular location is the membrane. The polypeptide is V-set and immunoglobulin domain-containing protein 10 (Vsig10) (Mus musculus (Mouse)).